Consider the following 288-residue polypeptide: Bifunctional protein FolD (288 aa).

Residues 166 to 168 and I232 contribute to the NADP(+) site; that span reads GAS.

This sequence belongs to the tetrahydrofolate dehydrogenase/cyclohydrolase family. As to quaternary structure, homodimer.

The catalysed reaction is (6R)-5,10-methylene-5,6,7,8-tetrahydrofolate + NADP(+) = (6R)-5,10-methenyltetrahydrofolate + NADPH. The enzyme catalyses (6R)-5,10-methenyltetrahydrofolate + H2O = (6R)-10-formyltetrahydrofolate + H(+). Its pathway is one-carbon metabolism; tetrahydrofolate interconversion. Catalyzes the oxidation of 5,10-methylenetetrahydrofolate to 5,10-methenyltetrahydrofolate and then the hydrolysis of 5,10-methenyltetrahydrofolate to 10-formyltetrahydrofolate. This Escherichia coli (strain SMS-3-5 / SECEC) protein is Bifunctional protein FolD.